The primary structure comprises 377 residues: Chorismate synthase (377 aa).

An NADP(+)-binding site is contributed by Arg47. Residues 124 to 126, 252 to 253, Gly296, 311 to 315, and Arg338 each bind FMN; these read RSS, NS, and KPTPS.

This sequence belongs to the chorismate synthase family. Requires FMNH2 as cofactor.

The enzyme catalyses 5-O-(1-carboxyvinyl)-3-phosphoshikimate = chorismate + phosphate. It functions in the pathway metabolic intermediate biosynthesis; chorismate biosynthesis; chorismate from D-erythrose 4-phosphate and phosphoenolpyruvate: step 7/7. Functionally, catalyzes the anti-1,4-elimination of the C-3 phosphate and the C-6 proR hydrogen from 5-enolpyruvylshikimate-3-phosphate (EPSP) to yield chorismate, which is the branch point compound that serves as the starting substrate for the three terminal pathways of aromatic amino acid biosynthesis. This reaction introduces a second double bond into the aromatic ring system. This Methanococcus vannielii (strain ATCC 35089 / DSM 1224 / JCM 13029 / OCM 148 / SB) protein is Chorismate synthase.